The primary structure comprises 130 residues: Small ribosomal subunit protein uS11 (130 aa).

Belongs to the universal ribosomal protein uS11 family. As to quaternary structure, part of the 30S ribosomal subunit. Interacts with proteins S7 and S18. Binds to IF-3.

Its function is as follows. Located on the platform of the 30S subunit, it bridges several disparate RNA helices of the 16S rRNA. Forms part of the Shine-Dalgarno cleft in the 70S ribosome. In Thiobacillus denitrificans (strain ATCC 25259 / T1), this protein is Small ribosomal subunit protein uS11.